We begin with the raw amino-acid sequence, 713 residues long: Cyclomaltodextrin glucanotransferase (713 aa).

Residues 1-27 form the signal peptide; the sequence is MKKFLKSTAALALGLSLTFGLFSPAQA. Positions 28–165 are A1; that stretch reads APDTSVSNKQ…NIKVIIDFAP (138 aa). Aspartate 54, asparagine 56, asparagine 59, and asparagine 60 together coordinate Ca(2+). Residues cysteine 70 and cysteine 77 are joined by a disulfide bond. Residues glycine 78 and aspartate 80 each contribute to the Ca(2+) site. 127–128 is a substrate binding site; the sequence is YW. A Ca(2+)-binding site is contributed by asparagine 166. Residues 166–229 are b; it reads NHTSPASSDQ…NLYDLADLNH (64 aa). Substrate is bound by residues histidine 167 and 172 to 174; that span reads SSD. Isoleucine 217 contributes to the Ca(2+) binding site. 220-223 serves as a coordination point for substrate; it reads NLYD. Aspartate 226 contacts Ca(2+). Residues 230–433 form an A2 region; sequence NNSTVDVYLK…LRKCNPAIAY (204 aa). A substrate-binding site is contributed by arginine 254. Aspartate 256 serves as the catalytic Nucleophile. 259-260 is a binding site for substrate; sequence KH. Residue histidine 260 participates in Ca(2+) binding. The active-site Proton donor is the glutamate 284. Residue alanine 342 participates in Ca(2+) binding. Substrate contacts are provided by histidine 354, aspartate 398, and arginine 402. The tract at residues 434 to 522 is c; the sequence is GSTQERWINN…GTAVWQYTAA (89 aa). Residues 523–609 are d; that stretch reads TATPTIGHVG…SNVYDNFEVL (87 aa). In terms of domain architecture, IPT/TIG spans 526–607; the sequence is PTIGHVGPMM…TASNVYDNFE (82 aa). Residue aspartate 604 coordinates Ca(2+). The 106-residue stretch at 608-713 folds into the CBM20 domain; it reads VLSGDQVSVR…TATINVNWQP (106 aa). The interval 610 to 713 is e; sequence SGDQVSVRFV…TATINVNWQP (104 aa).

This sequence belongs to the glycosyl hydrolase 13 family. In terms of assembly, monomer. The cofactor is Ca(2+).

The protein localises to the secreted. It carries out the reaction Cyclizes part of a (1-&gt;4)-alpha-D-glucan chain by formation of a (1-&gt;4)-alpha-D-glucosidic bond.. This chain is Cyclomaltodextrin glucanotransferase (cgt), found in Niallia circulans (Bacillus circulans).